We begin with the raw amino-acid sequence, 137 residues long: Small ribosomal subunit protein uS12 (137 aa).

The tract at residues 1–26 (MPTINQLVTKGRKRKASKTKSPALNQ) is disordered.

Belongs to the universal ribosomal protein uS12 family. Part of the 30S ribosomal subunit. Contacts proteins S8 and S17. May interact with IF1 in the 30S initiation complex.

Functionally, with S4 and S5 plays an important role in translational accuracy. Interacts with and stabilizes bases of the 16S rRNA that are involved in tRNA selection in the A site and with the mRNA backbone. Located at the interface of the 30S and 50S subunits, it traverses the body of the 30S subunit contacting proteins on the other side and probably holding the rRNA structure together. The combined cluster of proteins S8, S12 and S17 appears to hold together the shoulder and platform of the 30S subunit. The polypeptide is Small ribosomal subunit protein uS12 (Mycoplasmopsis pulmonis (strain UAB CTIP) (Mycoplasma pulmonis)).